The following is a 695-amino-acid chain: Electrogenic aspartate/glutamate antiporter Aralar, mitochondrial (695 aa).

An N-terminal domain region spans residues 1–310; that stretch reads MPMHIPFPFN…DYSDLSNIAP (310 aa). Topologically, residues 2–345 are mitochondrial intermembrane; sequence PMHIPFPFNW…FIQVLESSYR (344 aa). EF-hand domains are found at residues 71–104, 105–140, 142–175, and 176–211; these read FNDE…GLLC, TPDA…TELH, KIPF…LLHD, and FHEE…VKRH. Residues D84, S86, D88, L90, E95, D118, N122, T124, and D129 each coordinate Ca(2+). Ca(2+)-binding residues include D189, T193, and D200. Residues 311-327 form a linker loop domain region; sequence EHYTKHMTHRLAEIKAV. Positions 336-627 are carrier domain; that stretch reads FIQVLESSYR…RLFYVDFGGT (292 aa). Solcar repeat units follow at residues 340 to 431, 439 to 523, and 531 to 619; these read LESS…VRDK, IPTW…TKAM, and NHPL…LQRL. A helical transmembrane segment spans residues 346 to 363; that stretch reads FTLGSFAGAVGATVVYPI. Residues 364-405 are Mitochondrial matrix-facing; it reads DLVKTRMQNQRAGSYIGEVAYRNSWDCFKKVVRHEGFMGLYR. Residues 406 to 425 traverse the membrane as a helical segment; sequence GLLPQLMGVAPEKAIKLTVN. Over 426–448 the chain is Mitochondrial intermembrane; the sequence is DLVRDKLTDKKGNIPTWAEVLAG. Residues 449–462 form a helical membrane-spanning segment; sequence GCAGASQVVFTNPL. The Mitochondrial matrix segment spans residues 463-497; that stretch reads EIVKIRLQVAGEIASGSKIRAWSVVRELGLFGLYK. Residues 498-517 form a helical membrane-spanning segment; that stretch reads GARACLLRDVPFSAIYFPTY. Residues 518-536 lie on the Mitochondrial intermembrane side of the membrane; it reads AHTKAMMADKDGYNHPLTL. A helical membrane pass occupies residues 537–554; that stretch reads LAAGAIAGVPAASLVTPA. Residues 555–593 are Mitochondrial matrix-facing; the sequence is DVIKTRLQVVARSGQTTYTGVWDATKKIMAEEGPRAFWK. Residues 594–613 form a helical membrane-spanning segment; sequence GTAARVFRSSPQFGVTLVTY. The Mitochondrial intermembrane portion of the chain corresponds to 614–695; sequence ELLQRLFYVD…AASPSTATGS (82 aa). The segment at 628–695 is C-terminal domain; it reads QPKGSEAHKI…AASPSTATGS (68 aa).

Belongs to the mitochondrial carrier (TC 2.A.29) family. In terms of assembly, homodimer (via N-terminus). The cofactor is Ca(2+). Expressed throughout the body in both males and females, including in ovaries and testes. As to expression, specifically expressed in female ovaries. In terms of tissue distribution, expressed throughout the body in both males and females but absent from ovaries and testes.

The protein resides in the mitochondrion inner membrane. It catalyses the reaction L-aspartate(in) + L-glutamate(out) + H(+)(out) = L-aspartate(out) + L-glutamate(in) + H(+)(in). The enzyme catalyses 3-sulfino-L-alanine(out) + L-glutamate(in) + H(+)(in) = 3-sulfino-L-alanine(in) + L-glutamate(out) + H(+)(out). The catalysed reaction is L-2-aminoadipate(in) + L-glutamate(out) + H(+)(out) = L-2-aminoadipate(out) + L-glutamate(in) + H(+)(in). It carries out the reaction L-glutamine(in) + L-glutamate(out) + Na(+)(out) + H(+)(out) = L-glutamine(out) + L-glutamate(in) + Na(+)(in) + H(+)(in). Activated by Ca(2+). Inhibited by p-chloromercuribenzoate, pyrocarbonate, mersalyl, tannic acid and N-ethylmaleimide. In terms of biological role, mitochondrial electrogenic aspartate/glutamate antiporter that favors efflux of aspartate and entry of glutamate and proton within the mitochondria as part of the malate-aspartate shuttle. Also mediates the exchange of L-cysteinesulfinate (3-sulfino-L-alanine) for L-glutamate. Necessary for gamma-aminobutyric acid (GABA) uptake in brain mitochondria in response to increased mitochondrial membrane polarization; does not possess detectable GABA transport activity but role may be indirect. Possesses transport activity towards L-aspartate, L-glutamate and L-cysteinesulfinate (3-sulfino-L-alanine). L-glutamine transport activity is undetectable. GABA transport activity is undetectable. Its function is as follows. Possesses transport activity towards L-aspartate, L-glutamate and L-cysteinesulfinate (3-sulfino-L-alanine). Has a wider substrate specificity range that includes L-2-aminoadipate and L-glutamine. GABA transport activity is undetectable. The polypeptide is Electrogenic aspartate/glutamate antiporter Aralar, mitochondrial (Drosophila melanogaster (Fruit fly)).